The sequence spans 636 residues: C-terminal binding protein AN (636 aa).

The interval 1–21 is disordered; sequence MSKIRSSATMPHRDQPSPASP. Residues serine 91, 147–148, 169–174, aspartate 193, 231–237, 258–260, aspartate 284, and 307–311 each bind NAD(+); these read WL, VGRSVS, CALTNDT, TGS, and RSADY. The tract at residues 341–489 is disordered; sequence VSDEEVEESE…PLEVMQESSP (149 aa). Residues 342–357 show a composition bias toward acidic residues; the sequence is SDEEVEESEASEEEEQ. Residues 369 to 384 show a composition bias toward polar residues; sequence ESTSRQQGESTLTSTE. Over residues 385-395 the composition is skewed to basic and acidic residues; it reads IVRREASELKE. The segment covering 398 to 409 has biased composition (polar residues); sequence SPGQQHVSQNTA. The span at 417–429 shows a compositional bias: basic residues; the sequence is SRSGKKAKKRHSQ. Residues 430 to 445 show a composition bias toward polar residues; that stretch reads QKYMQKTDGSSGLNEE. Positions 470 to 480 are enriched in basic and acidic residues; it reads SPEDSRSRKTP.

It belongs to the D-isomer specific 2-hydroxyacid dehydrogenase family. Plant AN subfamily. As to quaternary structure, homodimer. Interacts with KCBP and SUB (via intra-cellular domain); AN is not required for the correct subcellular localization and recycling of SUB. Binds to SOKs proteins polymers (e.g. SOK1, SOK2, SOK3 and SOK4). Interacts with IPGA1 on microtubule upon mechanical stress to regulate microtubule organization. NAD(+) serves as cofactor. In terms of tissue distribution, expressed in cotyledons, leaves, roots, stems and floral buds.

Its subcellular location is the cytoplasm. It is found in the golgi apparatus. The protein resides in the trans-Golgi network. The protein localises to the cytoskeleton. Involved in controlling the equilibrium between tubular and stacked structures in the Golgi complex. Required for cortical microtubules (MTs) arrangement that confers cell shape. Cooperatively with IPGA1, negatively regulates cortical microtubules (CMTs) organization in response to mechanical stress and modulates pavement cells morphogenesis leading to puzzle shape, probably in an AAA1/KTN1-dependent manner. Regulates the width of leaves by controlling the polar elongation of leaf cells. Involved in the regulation of trichome branching. Seems to not be able to regulate gene transcription. Regulates epidermal cell divisions and elongation in a non-cell-autonomous manner (regulated by subepidermal cells), but regulates epidermal cell polarity, shape, trichome branching and elongation in a cell-autonomous manner. Negatively regulates growth in the petiole elongation. Prevents lipid peroxidation as a result of abiotic stress response. Is involved in the SUB-dependent signaling mechanism and may act in a membrane trafficking event around the trans-Golgi network. The sequence is that of C-terminal binding protein AN from Arabidopsis thaliana (Mouse-ear cress).